A 54-amino-acid chain; its full sequence is MDIVKIICAILLPPLGVFLQVGIGKDFWINLLLTIFGLYILGLVHAIWVIARER.

2 helical membrane passes run 3–23 (IVKI…QVGI) and 31–51 (LLLT…WVIA).

The protein belongs to the UPF0057 (PMP3) family.

The protein resides in the cell membrane. This Synechocystis sp. (strain ATCC 27184 / PCC 6803 / Kazusa) protein is UPF0057 membrane protein ssr1169.